The chain runs to 229 residues: Sperm-associated microtubule inner protein 5 (229 aa).

Residues 181 to 201 (PEFSGPGQTPPSEDPQAPRPC) form a disordered region.

Microtubule inner protein component of sperm flagellar doublet microtubules. As to expression, expressed in testis (at protein level).

The protein resides in the cytoplasm. It is found in the cytoskeleton. The protein localises to the flagellum axoneme. Its subcellular location is the nucleus. Its function is as follows. Microtubule inner protein (MIP) part of the dynein-decorated doublet microtubules (DMTs) in flagellum axoneme. May serve to reinforce and thus stabilize the microtubule structure in the sperm flagella. The chain is Sperm-associated microtubule inner protein 5 (Spmip5) from Mus musculus (Mouse).